Reading from the N-terminus, the 1142-residue chain is DNA-directed RNA polymerase subunit beta N-terminal section (1142 aa).

It belongs to the RNA polymerase beta chain family. In terms of assembly, in plastids the minimal PEP RNA polymerase catalytic core is composed of four subunits: alpha, beta, beta', and beta''. When a (nuclear-encoded) sigma factor is associated with the core the holoenzyme is formed, which can initiate transcription.

The protein resides in the plastid. The protein localises to the chloroplast. The catalysed reaction is RNA(n) + a ribonucleoside 5'-triphosphate = RNA(n+1) + diphosphate. Its function is as follows. DNA-dependent RNA polymerase catalyzes the transcription of DNA into RNA using the four ribonucleoside triphosphates as substrates. This Pleurastrum terricola (Filamentous green alga) protein is DNA-directed RNA polymerase subunit beta N-terminal section (rpoB1).